The chain runs to 125 residues: Fluoride-specific ion channel FluC (125 aa).

Transmembrane regions (helical) follow at residues 1–21 (MFATFGFIALFAVLGAWARYG), 34–54 (FPWATLSINVLGCFLMGFLFF), 72–92 (TGGLGAYTTFSTFSLETLVLF), and 101–121 (LLYMFTSLFLCVGAAFAGAWI). Na(+) is bound by residues Gly76 and Thr79.

The protein belongs to the fluoride channel Fluc/FEX (TC 1.A.43) family.

The protein resides in the cell inner membrane. It carries out the reaction fluoride(in) = fluoride(out). Its activity is regulated as follows. Na(+) is not transported, but it plays an essential structural role and its presence is essential for fluoride channel function. Fluoride-specific ion channel. Important for reducing fluoride concentration in the cell, thus reducing its toxicity. This is Fluoride-specific ion channel FluC from Acidithiobacillus ferrooxidans (strain ATCC 23270 / DSM 14882 / CIP 104768 / NCIMB 8455) (Ferrobacillus ferrooxidans (strain ATCC 23270)).